Reading from the N-terminus, the 107-residue chain is Period circadian protein (107 aa).

Residues 81–107 (ITNGSNTGTGTSSGSFQPPLLTEALLN) form a disordered region. Residues 82-95 (TNGSNTGTGTSSGS) show a composition bias toward low complexity.

As to quaternary structure, forms a heterodimer with timeless (TIM); the complex then translocates into the nucleus. Post-translationally, phosphorylated with a circadian rhythmicity, probably by the double-time protein (dbt). Phosphorylation could be implicated in the stability of per monomer and in the formation of heterodimer per-tim.

Its subcellular location is the nucleus. The protein resides in the cytoplasm. It is found in the perinuclear region. Functionally, essential for biological clock functions. Determines the period length of circadian and ultradian rhythms; an increase in PER dosage leads to shortened circadian rhythms and a decrease leads to lengthened circadian rhythms. Essential for the circadian rhythmicity of locomotor activity, eclosion behavior, and for the rhythmic component of the male courtship song that originates in the thoracic nervous system. The biological cycle depends on the rhythmic formation and nuclear localization of the TIM-PER complex. Light induces the degradation of TIM, which promotes elimination of PER. Nuclear activity of the heterodimer coordinatively regulates PER and TIM transcription through a negative feedback loop. Behaves as a negative element in circadian transcriptional loop. Does not appear to bind DNA, suggesting indirect transcriptional inhibition. This is Period circadian protein (per) from Beris vallata (Common orange legionnaire).